The sequence spans 189 residues: MGIDINHKWDRKVRRTRPKSLDVYLSLLVKLYRFLYRRTKKKFNKIVMRRLFMSRTNHPPMSLNRVAHLMKLRGKDEKSVAVVIGTVTNDVRMMDVPKLNVCALRVTDKARQRILKNGGKIYTFDQLALLSPTGRNTVLMQGKRTAREVFKHFGRAPGVPHSNTRPYVQSKGRKFEKARGRRSSCGYKN.

Belongs to the eukaryotic ribosomal protein eL18 family.

The protein resides in the cytoplasm. The sequence is that of Large ribosomal subunit protein eL18 (RpL18) from Anopheles gambiae (African malaria mosquito).